Consider the following 433-residue polypeptide: 5-methylthioadenosine/S-adenosylhomocysteine deaminase (433 aa).

Zn(2+) is bound by residues H67 and H69. Residues E96, R148, R158, and H186 each contribute to the substrate site. H213 lines the Zn(2+) pocket. Substrate is bound by residues E216 and D301. D301 provides a ligand contact to Zn(2+).

The protein belongs to the metallo-dependent hydrolases superfamily. MTA/SAH deaminase family. It depends on Zn(2+) as a cofactor.

The enzyme catalyses S-adenosyl-L-homocysteine + H2O + H(+) = S-inosyl-L-homocysteine + NH4(+). It carries out the reaction S-methyl-5'-thioadenosine + H2O + H(+) = S-methyl-5'-thioinosine + NH4(+). Its function is as follows. Catalyzes the deamination of 5-methylthioadenosine and S-adenosyl-L-homocysteine into 5-methylthioinosine and S-inosyl-L-homocysteine, respectively. Is also able to deaminate adenosine. This is 5-methylthioadenosine/S-adenosylhomocysteine deaminase from Pelotomaculum thermopropionicum (strain DSM 13744 / JCM 10971 / SI).